The following is a 407-amino-acid chain: Guanine nucleotide-binding protein alpha-1 subunit (407 aa).

G2 carries the N-myristoyl glycine lipid modification. C3 carries S-palmitoyl cysteine lipidation. The G-alpha domain maps to 73–407 (NDIKVLLLGA…MSNNLQSLMF (335 aa)). The tract at residues 76–89 (KVLLLGAGDSGKTT) is G1 motif. Residues D84, S85, G86, K87, T88, T89, D190, L215, T221, G243, N309, K310, D312, and A380 each coordinate GTP. Residue T88 participates in Mg(2+) binding. A G2 motif region spans residues 213 to 221 (DILHCRIKT). T221 contributes to the Mg(2+) binding site. Residues 236-245 (YRFFDVGGQR) are G3 motif. The G4 motif stretch occupies residues 305-312 (ILFLNKLD). The interval 378 to 383 (TTATDT) is G5 motif.

The protein belongs to the G-alpha family. G(q) subfamily. As to quaternary structure, g proteins are composed of 3 units; alpha, beta and gamma. The alpha chain contains the guanine nucleotide binding site. Requires Mg(2+) as cofactor.

Functionally, implicated in the mating and sporulation pathway. Probably coupled to mating-factor receptors. May act in concert with Ras1. This Schizosaccharomyces pombe (strain 972 / ATCC 24843) (Fission yeast) protein is Guanine nucleotide-binding protein alpha-1 subunit (gpa1).